The primary structure comprises 367 residues: MSVNRILVINPGSTSTKIGVFDNERPVLEETIRHDEEQIGKYKRIIDQYEFRKETILEVLHSHGINISKLNAVCGRGGLLRPIEGGTYTVNDAMLEDLKNGFSGHHASNLGGILAYEIASGLNIPAFIVDPVVVDEMEPIARISGIAGMERKSIFHALNQKAVARKVAEELNHKYEDLNLLVTHMGGGITVGAHKKGKVIDVNNGLNGEGPFSPERAGTVPVGQLVEMCFSGEYYRDEMVKKLVGQGGLVSLIGTNDAIKVEQMVEKGDPEATLIYKAMAYQVAKEIGGASAVLHGKIDAIVLTGGLAYSKILVDEIKERVDWIADVIVHPGEDELQALAEGALRVLREEEAPKEYIVREKETVARG.

This sequence belongs to the acetokinase family.

Its subcellular location is the cytoplasm. It carries out the reaction butanoate + ATP = butanoyl phosphate + ADP. The protein is Probable butyrate kinase of Bacillus anthracis (strain A0248).